The primary structure comprises 2202 residues: Nonribosomal peptide synthetase 5 (2202 aa).

The segment at 58–443 is adenylation 1; that stretch reads TYAQLDALSD…LLSYDKVDSA (386 aa). The region spanning 517–593 is the Carrier 1 domain; the sequence is ERGLGAVESV…NIAAAVVELS (77 aa). S554 is modified (O-(pantetheine 4'-phosphoryl)serine). Residues 625-918 are condensation 1; sequence IAPMTDMQTR…INTLPLAINT (294 aa). Positions 1105–1482 are adenylation 2; it reads TYREFGRMTE…EVQSTISKLA (378 aa). The region spanning 1563–1643 is the Carrier 2 domain; the sequence is DLETDTQRVL…DLSLAIDELV (81 aa). An O-(pantetheine 4'-phosphoryl)serine modification is found at S1602. Residues 1664 to 1952 are condensation 2; sequence GQLPLSYLEK…FLDRLLLRIQ (289 aa). The disordered stretch occupies residues 2103–2129; that stretch reads PVGLTPSHEGSAELTNGTNKTDSTTGQ. Polar residues predominate over residues 2115 to 2129; the sequence is ELTNGTNKTDSTTGQ. Residues 2130–2202 enclose the Carrier 3 domain; sequence QELENNLTDV…LELATCAVII (73 aa). Position 2164 is an O-(pantetheine 4'-phosphoryl)serine (S2164).

It belongs to the NRP synthetase family.

In terms of biological role, nonribosomal peptide synthesis (NRPS) is a key mechanism responsible for the biosynthesis of bioactive metabolites which are potentially contributing to organismal virulence. The protein is Nonribosomal peptide synthetase 5 (NRPS5) of Aspergillus fumigatus (strain ATCC MYA-4609 / CBS 101355 / FGSC A1100 / Af293) (Neosartorya fumigata).